The chain runs to 405 residues: MEAVLRWITAGESHGPALVAILEGMVAGVEVTSEDISAQLARRRLGYGRGARMKFEADKVTMVGGVRHGRTMGGPVAIEVANSEWPKWTTVMSADPVDPAELADLARNAPLTRPRPGHADYSGMLKYNFDDARNVLERASARETAARVAAGTVARNFLRQALGVEVVSHVVAIGTAANTTGVVPTAADLATVDESPVRAFDAAAEAAMIAEIEAAKKDGDTLGGVVEVIVEGLPVGLGSFTSGENRLDSRLAAALMGIQAIKGVEVGDGFETARRRGSQAHDEMRPGPDGVLRSTNRAGGLEGGMTNGEPLRVRAAMKPISTVPRALATVDMTTGEEAVAIHQRSDVCAVPAAGVVAEAMVALVVAQAALEKFGGDSLTETVDNITSYVKRISTRPHVPADSRPQ.

NADP(+) contacts are provided by R43 and R49. Residues 138 to 140 (RAS) and 259 to 260 (QA) each bind FMN. Residues 275 to 286 (RRGSQAHDEMRP) are compositionally biased toward basic and acidic residues. The disordered stretch occupies residues 275–308 (RRGSQAHDEMRPGPDGVLRSTNRAGGLEGGMTNG). Residues G303, 318–322 (KPIST), and R344 contribute to the FMN site.

It belongs to the chorismate synthase family. In terms of assembly, homotetramer. It depends on FMNH2 as a cofactor.

The enzyme catalyses 5-O-(1-carboxyvinyl)-3-phosphoshikimate = chorismate + phosphate. The protein operates within metabolic intermediate biosynthesis; chorismate biosynthesis; chorismate from D-erythrose 4-phosphate and phosphoenolpyruvate: step 7/7. In terms of biological role, catalyzes the anti-1,4-elimination of the C-3 phosphate and the C-6 proR hydrogen from 5-enolpyruvylshikimate-3-phosphate (EPSP) to yield chorismate, which is the branch point compound that serves as the starting substrate for the three terminal pathways of aromatic amino acid biosynthesis. This reaction introduces a second double bond into the aromatic ring system. The protein is Chorismate synthase of Nocardia farcinica (strain IFM 10152).